Reading from the N-terminus, the 274-residue chain is Dermonecrotic toxin LspiSicTox-betaIII2 (274 aa).

Residue His5 is part of the active site. Residues Glu25 and Asp27 each contribute to the Mg(2+) site. Catalysis depends on His41, which acts as the Nucleophile. 2 disulfide bridges follow: Cys45–Cys51 and Cys47–Cys189. Asp85 contacts Mg(2+).

This sequence belongs to the arthropod phospholipase D family. Class II subfamily. It depends on Mg(2+) as a cofactor. In terms of tissue distribution, expressed by the venom gland.

The protein localises to the secreted. The enzyme catalyses an N-(acyl)-sphingosylphosphocholine = an N-(acyl)-sphingosyl-1,3-cyclic phosphate + choline. It catalyses the reaction an N-(acyl)-sphingosylphosphoethanolamine = an N-(acyl)-sphingosyl-1,3-cyclic phosphate + ethanolamine. The catalysed reaction is a 1-acyl-sn-glycero-3-phosphocholine = a 1-acyl-sn-glycero-2,3-cyclic phosphate + choline. It carries out the reaction a 1-acyl-sn-glycero-3-phosphoethanolamine = a 1-acyl-sn-glycero-2,3-cyclic phosphate + ethanolamine. Dermonecrotic toxins cleave the phosphodiester linkage between the phosphate and headgroup of certain phospholipids (sphingolipid and lysolipid substrates), forming an alcohol (often choline) and a cyclic phosphate. This toxin acts on sphingomyelin (SM). It may also act on ceramide phosphoethanolamine (CPE), lysophosphatidylcholine (LPC) and lysophosphatidylethanolamine (LPE), but not on lysophosphatidylserine (LPS), and lysophosphatidylglycerol (LPG). It acts by transphosphatidylation, releasing exclusively cyclic phosphate products as second products. Induces dermonecrosis, hemolysis, increased vascular permeability, edema, inflammatory response, and platelet aggregation. The polypeptide is Dermonecrotic toxin LspiSicTox-betaIII2 (Loxosceles spinulosa (Recluse spider)).